Consider the following 230-residue polypeptide: Fibrillarin-like rRNA/tRNA 2'-O-methyltransferase (230 aa).

Residues 87-88, 105-106, 130-131, and 150-153 contribute to the S-adenosyl-L-methionine site; these read TT, EY, DA, and DVAQ.

Interacts with nop5. Component of box C/D small ribonucleoprotein (sRNP) particles that contain rpl7ae, FlpA and nop5, plus a guide RNA.

Involved in pre-rRNA and tRNA processing. Utilizes the methyl donor S-adenosyl-L-methionine to catalyze the site-specific 2'-hydroxyl methylation of ribose moieties in rRNA and tRNA. Site specificity is provided by a guide RNA that base pairs with the substrate. Methylation occurs at a characteristic distance from the sequence involved in base pairing with the guide RNA. This is Fibrillarin-like rRNA/tRNA 2'-O-methyltransferase from Methanocaldococcus jannaschii (strain ATCC 43067 / DSM 2661 / JAL-1 / JCM 10045 / NBRC 100440) (Methanococcus jannaschii).